Consider the following 496-residue polypeptide: Iroquois-class homeodomain protein irx-4 (496 aa).

The homeobox; TALE-type DNA-binding region spans 141 to 203 (GSTRRKNATR…NARRRLKKEN (63 aa)). A disordered region spans residues 203 to 236 (NKMTWPPRNKCSDEKRPYDEEEEEEEEEDSQKAT). Acidic residues predominate over residues 221-231 (DEEEEEEEEED).

It belongs to the TALE/IRO homeobox family. Expressed in the neural plate in overlapping patterns with other irx members, which all share an anterior border of expression. Broadly expressed in the tailbud rhombencephalon (hindbrain). Outside the nervous system and at tailbud stages, expressed in the developing otic vesicle, branchial arches and prospective heart region.

It localises to the nucleus. Functionally, acts partially redundantly with other irx members in neural patterning. Required for formation of the posterior forebrain, midbrain, hindbrain, and to a lesser extent, spinal cord. Patterns the neuroectoderm in both the anterior/posterior and dorsal/ventral axes. Does not appear to play a role in pronephros kidney development. The polypeptide is Iroquois-class homeodomain protein irx-4 (Xenopus tropicalis (Western clawed frog)).